A 146-amino-acid polypeptide reads, in one-letter code: Anti-sigma F factor (146 aa).

It belongs to the anti-sigma-factor family.

It carries out the reaction L-seryl-[protein] + ATP = O-phospho-L-seryl-[protein] + ADP + H(+). The catalysed reaction is L-threonyl-[protein] + ATP = O-phospho-L-threonyl-[protein] + ADP + H(+). Its function is as follows. Binds to sigma F and blocks its ability to form an RNA polymerase holoenzyme (E-sigma F). Phosphorylates SpoIIAA on a serine residue. This phosphorylation may enable SpoIIAA to act as an anti-anti-sigma factor that counteracts SpoIIAB and thus releases sigma F from inhibition. This chain is Anti-sigma F factor, found in Oceanobacillus iheyensis (strain DSM 14371 / CIP 107618 / JCM 11309 / KCTC 3954 / HTE831).